A 134-amino-acid polypeptide reads, in one-letter code: ATP synthase epsilon chain (134 aa).

This sequence belongs to the ATPase epsilon chain family. In terms of assembly, F-type ATPases have 2 components, CF(1) - the catalytic core - and CF(0) - the membrane proton channel. CF(1) has five subunits: alpha(3), beta(3), gamma(1), delta(1), epsilon(1). CF(0) has three main subunits: a, b and c.

It is found in the cell inner membrane. Produces ATP from ADP in the presence of a proton gradient across the membrane. In Nitratidesulfovibrio vulgaris (strain DSM 19637 / Miyazaki F) (Desulfovibrio vulgaris), this protein is ATP synthase epsilon chain.